A 548-amino-acid polypeptide reads, in one-letter code: T-complex protein 1 subunit theta (548 aa).

Positions 528-548 (ATGGPKPRGPKQQDEDDDGMA) are disordered.

The protein belongs to the TCP-1 chaperonin family. Heterooligomeric complex.

It is found in the cytoplasm. In terms of biological role, molecular chaperone; assists the folding of proteins upon ATP hydrolysis. Known to play a role, in vitro, in the folding of actin and tubulin. Required for correct subcellular localization of pgl-1. In Caenorhabditis briggsae, this protein is T-complex protein 1 subunit theta.